The primary structure comprises 121 residues: Large ribosomal subunit protein uL18 (121 aa).

Belongs to the universal ribosomal protein uL18 family. In terms of assembly, part of the 50S ribosomal subunit; part of the 5S rRNA/L5/L18/L25 subcomplex. Contacts the 5S and 23S rRNAs.

This is one of the proteins that bind and probably mediate the attachment of the 5S RNA into the large ribosomal subunit, where it forms part of the central protuberance. In Bdellovibrio bacteriovorus (strain ATCC 15356 / DSM 50701 / NCIMB 9529 / HD100), this protein is Large ribosomal subunit protein uL18.